Here is a 168-residue protein sequence, read N- to C-terminus: Large ribosomal subunit protein bL9 (168 aa).

Residues 149 to 168 are disordered; it reads QSFEEEPAPEAPAEEAEAAE. A compositionally biased stretch (acidic residues) spans 152–168; that stretch reads EEEPAPEAPAEEAEAAE.

This sequence belongs to the bacterial ribosomal protein bL9 family.

Its function is as follows. Binds to the 23S rRNA. The protein is Large ribosomal subunit protein bL9 of Desulfovibrio desulfuricans (strain ATCC 27774 / DSM 6949 / MB).